Here is a 205-residue protein sequence, read N- to C-terminus: Allergen Asp f 15 homolog (205 aa).

The protein belongs to the cerato-platanin family.

The protein localises to the secreted. This is Allergen Asp f 15 homolog from Arthroderma benhamiae (strain ATCC MYA-4681 / CBS 112371) (Trichophyton mentagrophytes).